Consider the following 683-residue polypeptide: MTEATKEDVTAAQLLTAPVGHDGARKGMDVDILDVEELRDWQRRKRSEFEEALKRNRLDVRQWLRYAAFEYEQRDMRRARSVFERALAVAPGDVVVWLRYVDCELRARDVNHARNLLVRATALLPRVDKLWYKYVLMEESLGQVELVRGVYTKWCTLEPAAAAWDAFVDFETRQGQVEHVREVYSRYVMVHPVAATWLKWVAFERKHGDAGTVRRVYSLACDTLTAFAGADVHEVEQLVVSFAEWEATQQELERSRAVLSVAVSRWPESSTLKDATAQLEKKFGGARAGESILFKRKREYEEQLLAHPLDYDAWWLYLDLLEESFPAELRAALAEATVKAVPRSQEKDMQWRKYVNLWLRYLLFLETVLVDSDLTRSMYQKLVREVIPNTKFTFAKAWIMYAEFEIRQEKLDKARKILGMSLGMCPKPKLFQYYIDLEIKLKEFDRVRRLHEKLLEFQPDVLSNWIEYAELEENLGDEDRARGIYEIGLTADGGLSQARQLQLMQRYIQFETDASEFERARALYSRYVALSGYDPNVWISCALYESSVPTAAQVASYAHDQPNSDGDDSDDAYEQEFELTEENKEQTRAIFEKALRHYTSEKDDEGRILVLQAYKDYESIHGSAEARQKIASRQPRKVTRKRTVDGIEKEYVAYEFPDDTVSTSSVASKFVSLAQRWKQQQAP.

HAT repeat units lie at residues 40-72 (DWQR…FEYE), 74-106 (RDMR…CELR), 108-140 (RDVN…MEES), 142-173 (GQVE…FETR), 175-206 (GQVE…FERK), 291-323 (SILF…LLEE), 336-367 (ATVK…FLET), 374-407 (LTRS…FEIR), 409-440 (EKLD…LEIK), 442-474 (KEFD…LEEN), 476-513 (GDED…FETD), 515-547 (SEFE…YESS), and 582-620 (ENKE…YESI).

This sequence belongs to the crooked-neck family. In terms of assembly, associated with the spliceosome.

The protein resides in the nucleus. In terms of biological role, involved in pre-mRNA splicing and cell cycle progression. Required for the spliceosome assembly and initiation of the DNA replication. The sequence is that of Pre-mRNA-splicing factor CLF1 (CLF1) from Eremothecium gossypii (strain ATCC 10895 / CBS 109.51 / FGSC 9923 / NRRL Y-1056) (Yeast).